A 257-amino-acid chain; its full sequence is Tryptophan synthase alpha chain (257 aa).

Active-site proton acceptor residues include E51 and D62.

Belongs to the TrpA family. As to quaternary structure, tetramer of two alpha and two beta chains.

The catalysed reaction is (1S,2R)-1-C-(indol-3-yl)glycerol 3-phosphate + L-serine = D-glyceraldehyde 3-phosphate + L-tryptophan + H2O. It participates in amino-acid biosynthesis; L-tryptophan biosynthesis; L-tryptophan from chorismate: step 5/5. In terms of biological role, the alpha subunit is responsible for the aldol cleavage of indoleglycerol phosphate to indole and glyceraldehyde 3-phosphate. The sequence is that of Tryptophan synthase alpha chain from Nitratidesulfovibrio vulgaris (strain ATCC 29579 / DSM 644 / CCUG 34227 / NCIMB 8303 / VKM B-1760 / Hildenborough) (Desulfovibrio vulgaris).